We begin with the raw amino-acid sequence, 194 residues long: ATP-dependent Clp protease proteolytic subunit (194 aa).

Catalysis depends on Ser-98, which acts as the Nucleophile. Residue His-123 is part of the active site.

Belongs to the peptidase S14 family. In terms of assembly, fourteen ClpP subunits assemble into 2 heptameric rings which stack back to back to give a disk-like structure with a central cavity, resembling the structure of eukaryotic proteasomes.

It localises to the cytoplasm. The enzyme catalyses Hydrolysis of proteins to small peptides in the presence of ATP and magnesium. alpha-casein is the usual test substrate. In the absence of ATP, only oligopeptides shorter than five residues are hydrolyzed (such as succinyl-Leu-Tyr-|-NHMec, and Leu-Tyr-Leu-|-Tyr-Trp, in which cleavage of the -Tyr-|-Leu- and -Tyr-|-Trp bonds also occurs).. Its function is as follows. Cleaves peptides in various proteins in a process that requires ATP hydrolysis. Has a chymotrypsin-like activity. Plays a major role in the degradation of misfolded proteins. This Clostridium tetani (strain Massachusetts / E88) protein is ATP-dependent Clp protease proteolytic subunit.